Consider the following 150-residue polypeptide: Transcriptional repressor NrdR (150 aa).

A zinc finger spans residues 3-34; that stretch reads CPFCAFADSKVVDSRPDKGGSTIRRRRECESC. The ATP-cone domain occupies 49–139; that stretch reads PLVIKKDGRR…VYRSFKDITE (91 aa).

The protein belongs to the NrdR family. Zn(2+) serves as cofactor.

Negatively regulates transcription of bacterial ribonucleotide reductase nrd genes and operons by binding to NrdR-boxes. The sequence is that of Transcriptional repressor NrdR from Geotalea uraniireducens (strain Rf4) (Geobacter uraniireducens).